A 129-amino-acid polypeptide reads, in one-letter code: UPF0325 protein SG1947 (129 aa).

Belongs to the UPF0325 family.

This Sodalis glossinidius (strain morsitans) protein is UPF0325 protein SG1947.